Reading from the N-terminus, the 136-residue chain is Piercer of microtubule wall 1 protein (136 aa).

The interval 1 to 24 is disordered; that stretch reads MAEECPRACAEPVAPKATAPPERT.

The protein belongs to the PIERCE1 family. As to quaternary structure, microtubule inner protein component of sperm flagellar doublet microtubules. Interacts with CFAP53, ODAD1 and ODAD3; the interactions link the outer dynein arms docking complex (ODA-DC) to the internal microtubule inner proteins (MIP) in cilium axoneme. As to expression, expressed in airway epithelial cells.

The protein localises to the cytoplasm. It is found in the cytoskeleton. Its subcellular location is the cilium axoneme. It localises to the flagellum axoneme. In terms of biological role, microtubule inner protein involved in the attachment of outer dynein arms (ODAs) to dynein-decorated doublet microtubules (DMTs) in cilia axoneme, which is required for motile cilia beating. Functions at the initial step of left-right asymmetry specification of the visceral organs. This chain is Piercer of microtubule wall 1 protein, found in Homo sapiens (Human).